A 370-amino-acid chain; its full sequence is Polyadenylate-binding protein 4-like (370 aa).

RRM domains follow at residues 10–88 (ASLY…WSQR), 98–174 (GNVF…RFKN), 190–267 (TNVY…RAQK), and 293–369 (VKLY…LAQR).

The protein belongs to the polyadenylate-binding protein type-1 family.

Functionally, may bind RNA. The sequence is that of Polyadenylate-binding protein 4-like (PABPC4L) from Homo sapiens (Human).